The following is a 225-amino-acid chain: Uridylate kinase (225 aa).

9-10 (GS) serves as a coordination point for ATP. Glycine 44 is a binding site for UMP. Positions 45 and 49 each coordinate ATP. UMP-binding positions include aspartate 66 and 114 to 120 (THPGHTT). Residues threonine 140, asparagine 141, tyrosine 146, and aspartate 149 each contribute to the ATP site.

The protein belongs to the UMP kinase family. Homohexamer.

The protein resides in the cytoplasm. The catalysed reaction is UMP + ATP = UDP + ADP. The protein operates within pyrimidine metabolism; CTP biosynthesis via de novo pathway; UDP from UMP (UMPK route): step 1/1. Inhibited by UTP. Its function is as follows. Catalyzes the reversible phosphorylation of UMP to UDP. This Thermococcus onnurineus (strain NA1) protein is Uridylate kinase.